Reading from the N-terminus, the 151-residue chain is Ribosome maturation factor RimP (151 aa).

It belongs to the RimP family.

It is found in the cytoplasm. Its function is as follows. Required for maturation of 30S ribosomal subunits. The chain is Ribosome maturation factor RimP from Vibrio parahaemolyticus serotype O3:K6 (strain RIMD 2210633).